Here is a 647-residue protein sequence, read N- to C-terminus: Dihydrolipoyllysine-residue acetyltransferase component of pyruvate dehydrogenase complex (647 aa).

A mitochondrion-targeting transit peptide spans 1 to 86 (MWRVCARRAQ…LWGSPSRRWY (86 aa)). The 77-residue stretch at 91-167 (HQKVPLPSLS…PVGAIICITV (77 aa)) folds into the Lipoyl-binding 1 domain. S100 bears the Phosphoserine mark. N6-lipoyllysine is present on K132. The interval 184-216 (SAAPAPPAAPAPTPAAPAPSPTPSAQAPGSSYP) is disordered. Pro residues predominate over residues 187-205 (PAPPAAPAPTPAAPAPSPT). Positions 218–294 (HMQVLLPALS…PLGTPLCIIV (77 aa)) constitute a Lipoyl-binding 2 domain. K259 bears the N6-lipoyllysine mark. Residues 311–352 (VTDLKPPAPPPIPSPAAPVPPAPQPVAPPPSAPRPAAPAGPK) form a disordered region. The segment covering 316–348 (PPAPPPIPSPAAPVPPAPQPVAPPPSAPRPAAP) has biased composition (pro residues). The Peripheral subunit-binding (PSBD) domain occupies 356 to 393 (FVSPLAKKLAAEKGIDLTQVKGTGPDGRIIKKDIDSFV). Residue R461 coordinates CoA. Residue K466 is modified to N6-acetyllysine. Position 473 is an N6-succinyllysine (K473). S475 provides a ligand contact to CoA. K547 carries the N6-succinyllysine modification. S566, N567, and G591 together coordinate CoA. Catalysis depends on residues H620 and D624.

This sequence belongs to the 2-oxoacid dehydrogenase family. Part of the pyruvate dehydrogenase complex (PDHc) that is a multi-enzyme complex composed of multiple copies of three enzymes, pyruvate dehydrogenase (subunits PDH1A and PDHB, E1 component), dihydrolipoamide acetyltransferase (DLAT, E2 component), and dihydrolipoamide dehydrogenase (DLD, E3 component) to which is added an additional protein the E3-binding protein (PDHX, E3BP). In terms of structural architecture, the E2 and E3BP components assemble into a 60meric central core with icosahedral symmetry. The central core is decorated with E1 and E3 proteins. Currently, two alternative models for the E2:E3BP stoichiometry are considered as being either 48:12 (E2(48)-E3BP(12)) or 40:20 (E2(40)-E3BP(20)). Interacts with PDK2 and PDK3. Interacts with SIRT4. Interacts with PDHB. (R)-lipoate serves as cofactor. Post-translationally, delipoylated at Lys-132 and Lys-259 by SIRT4, delipoylation decreases the PHD complex activity.

It localises to the mitochondrion matrix. It catalyses the reaction N(6)-[(R)-dihydrolipoyl]-L-lysyl-[protein] + acetyl-CoA = N(6)-[(R)-S(8)-acetyldihydrolipoyl]-L-lysyl-[protein] + CoA. As part of the pyruvate dehydrogenase complex, catalyzes the transfers of an acetyl group to a lipoic acid moiety. The pyruvate dehydrogenase complex, catalyzes the overall conversion of pyruvate to acetyl-CoA and CO(2), and thereby links cytoplasmic glycolysis and the mitochondrial tricarboxylic acid (TCA) cycle. The polypeptide is Dihydrolipoyllysine-residue acetyltransferase component of pyruvate dehydrogenase complex (Bos taurus (Bovine)).